A 370-amino-acid chain; its full sequence is Seipin (370 aa).

The first 18 residues, Met1–Gly18, serve as a signal peptide directing secretion. At Arg19–Leu55 the chain is on the cytoplasmic side. A helical transmembrane segment spans residues Gly56–Phe76. Over Tyr77–Pro251 the chain is Lumenal. Residues Val252–Leu272 traverse the membrane as a helical segment. The Cytoplasmic segment spans residues Ser273–His370. A disordered region spans residues Lys346–His370. Basic and acidic residues predominate over residues Gly350–Arg359.

As to expression, widely expressed, with highest levels detected in fat body, moderate levels detected in salivary gland, midgut and muscle, and weak expression detected in brain.

It localises to the endoplasmic reticulum membrane. Its subcellular location is the lipid droplet. Its function is as follows. Acts as a tissue-autonomous lipid modulator, preventing ectopic lipid accumulation in salivary gland (a non-adipose tissue) and in promoting lipid storage in fat tissue. Required for the growth and maturation of small nascent lipid droplets (LDs) into larger mature LDs. The polypeptide is Seipin (Drosophila melanogaster (Fruit fly)).